The sequence spans 1706 residues: 5'-3' exoribonuclease 1 (1706 aa).

Residue Ser1348 is modified to Phosphoserine. Residues 1619 to 1706 (ENKEAQSSQA…VNFGVSKPSE (88 aa)) are disordered. Residues 1623–1642 (AQSSQATPVQTSQPDSSNIV) show a composition bias toward polar residues. Ser1645 is modified (phosphoserine). Residues 1647-1657 (RESSSASLKSS) are compositionally biased toward low complexity. The span at 1658–1676 (PIAQPASSFQVETASQGHS) shows a compositional bias: polar residues. Residues 1677 to 1694 (ISHHKSTPISSSRRKSRK) show a composition bias toward basic residues.

It belongs to the 5'-3' exonuclease family. In terms of assembly, found in a mRNP complex with UPF1, UPF2, UPF3B and XRN1. Associates with alpha and beta tubulins. Interacts with DIS3L2. Interacts with ZC3HAV1 in an RNA-dependent manner. Interacts with ZFP36L1. Interacts with TRIM71 (via NHL repeats) in an RNA-dependent manner. Interacts with YTHDC2 (via ANK repeats). Interacts with DHX34; the interaction is RNA-independent. As to expression, expressed in heart, brain, pancreas, spleen, testis, osteogenic sarcoma (OGS) biopsy and primary cell lines.

It localises to the cytoplasm. In terms of biological role, major 5'-3' exoribonuclease involved in mRNA decay. Required for the 5'-3'-processing of the G4 tetraplex-containing DNA and RNA substrates. The kinetic of hydrolysis is faster for G4 RNA tetraplex than for G4 DNA tetraplex and monomeric RNA tetraplex. Binds to RNA and DNA. Plays a role in replication-dependent histone mRNA degradation. May act as a tumor suppressor protein in osteogenic sarcoma (OGS). The chain is 5'-3' exoribonuclease 1 from Homo sapiens (Human).